Here is a 494-residue protein sequence, read N- to C-terminus: MLLKNCETDKQRDIRYACLFKELDVKGNGQVTLDNLISAFEKNDHPLKGNDEAIKMLFTAMDVNKDSVVDLSDFKKYASNAESQIWNGFQRIDLDHDGKIGINEINRYLSDLDNQSICNNELNHELSNEKVNKFSRFFEWAFPKRKANIALRGQASHKKNTDNDRSKKTTDSDLYVTYDQWRDFLLLVPRKQGSRLHTAYSYFYLFNEDVDLSSEGDVTLINDFIRGFGFFIAGGISGVISRTCTAPFDRLKVFLIARTDLSSILLNSKTDLLAKNPNADINKISSPLAKAVKSLYRQGGIKAFYVGNGLNVIKVFPESSIKFGSFEVTKKIMTKLEGCRDTKDLSKFSTYIAGGLAGMAAQFSVYPIDTLKFRVQCAPLDTKLKGNNLLFQTAKDMFREGGGQIILQRCHSRYSGHISLCCIRFGDFFCLKKMVYCQTGKDPEPTTRSGHSKQPGCTSNGCIQWNCRSFCCLSNQSFKNKTTSPRNICTSLCV.

The region spanning 11–46 (QRDIRYACLFKELDVKGNGQVTLDNLISAFEKNDHP) is the EF-hand 1 domain. Residues lysine 65, aspartate 70, aspartate 93, aspartate 95, aspartate 97, lysine 99, and glutamate 104 each contribute to the Ca(2+) site. EF-hand domains are found at residues 80-115 (NAESQIWNGFQRIDLDHDGKIGINEINRYLSDLDNQ), 120-155 (NELNHELSNEKVNKFSRFFEWAFPKRKANIALRGQA), and 156-191 (SHKKNTDNDRSKKTTDSDLYVTYDQWRDFLLLVPRK). Ca(2+) is bound by residues threonine 161 and serine 166. Solcar repeat units lie at residues 225 to 332 (IRGF…TKKI) and 345 to 434 (LSKF…LKKM). A run of 5 helical transmembrane segments spans residues 231–248 (FIAGGISGVISRTCTAPF), 307–326 (GNGLNVIKVFPESSIKFGSF), 355–368 (GLAGMAAQFSVYPI), 409–428 (RCHSRYSGHISLCCIRFGDF), and 458–475 (TSNGCIQWNCRSFCCLSN). One copy of the Solcar 3; truncated repeat lies at 452–494 (SKQPGCTSNGCIQWNCRSFCCLSNQSFKNKTTSPRNICTSLCV).

Belongs to the mitochondrial carrier (TC 2.A.29) family.

It localises to the mitochondrion inner membrane. Its function is as follows. Calcium-dependent mitochondrial solute carrier. The polypeptide is Truncated non-functional calcium-binding mitochondrial carrier SAL1-1 (SAL1) (Saccharomyces cerevisiae (strain ATCC 204508 / S288c) (Baker's yeast)).